The primary structure comprises 402 residues: O-glucosyltransferase rumi homolog (402 aa).

Residues 1 to 20 (MPYLEIVLALLVLSFQLGHS) form the signal peptide. 4 disulfide bridges follow: cysteine 67/cysteine 74, cysteine 72/cysteine 375, cysteine 118/cysteine 124, and cysteine 279/cysteine 302. Asparagine 71 is a glycosylation site (N-linked (GlcNAc...) asparagine). The Proton donor/acceptor role is filled by aspartate 149. Residues 189–194 (AISLYP) are interaction with the consensus sequence C-X-S-X-[PA]-C in peptide substrates. UDP-alpha-D-glucose-binding positions include 226–230 (RGSRT), arginine 234, 273–275 (VRL), and 291–295 (AASFR).

This sequence belongs to the glycosyltransferase 90 family.

It is found in the endoplasmic reticulum lumen. Its subcellular location is the secreted. It functions in the pathway protein modification; protein glycosylation. Functionally, protein O-glucosyltransferase. Catalyzes the reaction that attaches glucose through an O-glycosidic linkage to a conserved serine residue found in the consensus sequence C-X-S-X-[PA]-C in epidermal growth factor-like repeats. Regulates Notch signaling by glucosylating Notch in the ER, glucosylation is required for the correct folding and cleavage of Notch. The sequence is that of O-glucosyltransferase rumi homolog from Aedes aegypti (Yellowfever mosquito).